Consider the following 190-residue polypeptide: Large ribosomal subunit protein bL9 (190 aa).

The protein belongs to the bacterial ribosomal protein bL9 family.

In terms of biological role, binds to the 23S rRNA. In Methylorubrum extorquens (strain CM4 / NCIMB 13688) (Methylobacterium extorquens), this protein is Large ribosomal subunit protein bL9.